The chain runs to 193 residues: Potassium-transporting ATPase KdpC subunit (193 aa).

A helical transmembrane segment spans residues 8–28 (VVLLIFLTLITGVAYPLLATG).

The protein belongs to the KdpC family. In terms of assembly, the system is composed of three essential subunits: KdpA, KdpB and KdpC.

It localises to the cell inner membrane. In terms of biological role, part of the high-affinity ATP-driven potassium transport (or Kdp) system, which catalyzes the hydrolysis of ATP coupled with the electrogenic transport of potassium into the cytoplasm. This subunit acts as a catalytic chaperone that increases the ATP-binding affinity of the ATP-hydrolyzing subunit KdpB by the formation of a transient KdpB/KdpC/ATP ternary complex. The chain is Potassium-transporting ATPase KdpC subunit from Photorhabdus laumondii subsp. laumondii (strain DSM 15139 / CIP 105565 / TT01) (Photorhabdus luminescens subsp. laumondii).